The following is a 421-amino-acid chain: Zinc metalloproteinase-disintegrin-like lachestatin-1 (421 aa).

The Peptidase M12B domain occupies 10–206 (KYVKLVLVAD…DMPQCILEKP (197 aa)). 3 disulfide bridges follow: Cys121–Cys201, Cys161–Cys185, and Cys163–Cys168. Zn(2+) is bound at residue His146. The active site involves Glu147. The Zn(2+) site is built by His150 and His156. The 86-residue stretch at 214 to 299 (PPVCGNYFVE…AECTDRFQRN (86 aa)) folds into the Disintegrin domain. Residues Val216, Asn219, Phe221, Glu223, Glu226, and Asp229 each contribute to the Ca(2+) site. 14 cysteine pairs are disulfide-bonded: Cys217/Cys246, Cys228/Cys241, Cys230/Cys236, Cys240/Cys263, Cys254/Cys260, Cys259/Cys285, Cys272/Cys292, Cys279/Cys310, Cys303/Cys315, Cys322/Cys372, Cys337/Cys383, Cys350/Cys360, Cys367/Cys409, and Cys403/Cys414. The D/ECD-tripeptide signature appears at 278 to 280 (ECD). 5 residues coordinate Ca(2+): Asp280, Met281, Asp283, Asp294, and Arg295. The N-linked (GlcNAc...) asparagine glycan is linked to Asn312.

Belongs to the venom metalloproteinase (M12B) family. P-III subfamily. P-IIIc sub-subfamily. As to quaternary structure, homodimer; disulfide-linked. The cofactor is Zn(2+). As to expression, expressed by the venom gland.

It is found in the secreted. In terms of biological role, snake venom zinc metalloprotease that induces apoptosis in vascular endothelial cells (VEC), without degrading the extracellular matrix (it cannot cleave collagen) or inhibiting adhesion of VEC. Has also fibrinogenolytic and hemorrhagic activities. The protein is Zinc metalloproteinase-disintegrin-like lachestatin-1 of Lachesis muta rhombeata (Bushmaster).